The following is a 957-amino-acid chain: ERC protein 2 (957 aa).

Residues 1–13 are compositionally biased toward polar residues; sequence MYGSARTISNLEG. Residues 1–44 form a disordered region; that stretch reads MYGSARTISNLEGSPSRSPRLPRSPRLGHRRTSSGGGGGTGKTL. The segment covering 14–25 has biased composition (low complexity); it reads SPSRSPRLPRSP. Phosphoserine is present on residues Ser65 and Ser666. Residues 140–917 adopt a coiled-coil conformation; the sequence is RQVRDSTMLD…RMKLMADNYD (778 aa). Residues 922-943 are compositionally biased toward basic residues; the sequence is HYHHHHHHHHHRSPGRSQHSNH. Residues 922 to 957 form a disordered region; sequence HYHHHHHHHHHRSPGRSQHSNHRPSPDQDDEEGIWA. The segment covering 948 to 957 has biased composition (acidic residues); the sequence is DQDDEEGIWA.

As to quaternary structure, interacts with BSN, ERC1, PPFIA1, PPFIA2, PPFIA3 and PPFIA4. Interacts through its C-terminus with the PDZ domain of RIMS1. Part of a complex consisting of ERC2, RIMS1 and UNC13A. As to expression, expressed throughout the central nervous system, including hippocampus, cortex, cerebellum and olfactory bulb.

Its subcellular location is the cytoplasm. The protein localises to the synapse. The protein resides in the presynaptic active zone. It is found in the cytoskeleton. In terms of biological role, thought to be involved in the organization of the cytomatrix at the nerve terminals active zone (CAZ) which regulates neurotransmitter release. Seems to act together with BSN. May recruit liprin-alpha proteins to the CAZ. In Mus musculus (Mouse), this protein is ERC protein 2 (Erc2).